Here is a 326-residue protein sequence, read N- to C-terminus: Dolichyl-phosphate beta-glucosyltransferase (326 aa).

Over 1–7 (MWTCLCQ) the chain is Lumenal. The helical transmembrane segment at 8–28 (LCFYLLSTLAVAALSIAALVL) threads the bilayer. Residues 29-326 (YKTKPYPNIK…RIASIQKKEK (298 aa)) are Cytoplasmic-facing.

It belongs to the glycosyltransferase 2 family.

It is found in the endoplasmic reticulum membrane. The enzyme catalyses a di-trans,poly-cis-dolichyl phosphate + UDP-alpha-D-glucose = a di-trans,poly-cis-dolichyl beta-D-glucosyl phosphate + UDP. The protein operates within protein modification; protein glycosylation. Required for normal production of N-glycosylated proteins in the endoplasmic reticulum (ER). Required for embryonic segmentation, dorsal-ventral patterning and gastrulation. Required for chitin orientation and shaping of the apical and lateral plasma membranes of epidermal cells during cuticle differentiation. Also required for correctly shaping apical membrane topology of the epithelia of other organs such as the midgut and the hindgut. The sequence is that of Dolichyl-phosphate beta-glucosyltransferase (wol) from Drosophila melanogaster (Fruit fly).